A 629-amino-acid chain; its full sequence is uncharacterized protein (629 aa).

N-acetylmethionine is present on methionine 1. The disordered stretch occupies residues 308 to 395 (VDPEPEPDPP…PGRRSRARNA (88 aa)). Polar residues predominate over residues 322–334 (SANEPASQPNSRS). Residues 451–587 (LVIFVVDASG…VAEGAAAVVV (137 aa)) enclose the VWFA domain.

The protein belongs to the Mg-chelatase subunits D/I family.

This is an uncharacterized protein from Mycobacterium tuberculosis (strain ATCC 25618 / H37Rv).